Reading from the N-terminus, the 202-residue chain is Osteoclast-stimulating factor 1 (202 aa).

Positions 12–71 (GQVKVFRALYTFEPRTPDELYFEEGDIIYISDMSDTNWWKGTCKGRTGLIPSNYVAEQAE) constitute an SH3 domain. 3 ANK repeats span residues 72-101 (SIDNPLHEAAKRGNLSWLRECLDNQVGVNG), 105-135 (AGNTALYWACHGGHKDIVDVLFTQANLELNQ), and 139-168 (LGDTALHAAAWKGYADIVEMLLAKGARTDL).

The protein resides in the cytoplasm. Functionally, induces bone resorption, acting probably through a signaling cascade which results in the secretion of factor(s) enhancing osteoclast formation and activity. The protein is Osteoclast-stimulating factor 1 (OSTF1) of Gallus gallus (Chicken).